We begin with the raw amino-acid sequence, 199 residues long: Fe/S biogenesis protein NfuA (199 aa).

2 residues coordinate [4Fe-4S] cluster: Cys-156 and Cys-159.

The protein belongs to the NfuA family. Homodimer. [4Fe-4S] cluster serves as cofactor.

In terms of biological role, involved in iron-sulfur cluster biogenesis. Binds a 4Fe-4S cluster, can transfer this cluster to apoproteins, and thereby intervenes in the maturation of Fe/S proteins. Could also act as a scaffold/chaperone for damaged Fe/S proteins. The chain is Fe/S biogenesis protein NfuA from Actinobacillus pleuropneumoniae serotype 5b (strain L20).